We begin with the raw amino-acid sequence, 733 residues long: Vinexin (733 aa).

4 disordered regions span residues 1 to 51, 129 to 165, 224 to 285, and 352 to 448; these read MARI…SNLD, TWPG…RQDK, SARA…NQVP, and ETRL…KRKA. Positions 32–42 are enriched in basic and acidic residues; that stretch reads DPNRVHTKEQL. The segment covering 147–157 has biased composition (polar residues); the sequence is QHAQNWSATWT. In terms of domain architecture, SoHo spans 164–232; that stretch reads DKRWVKYEGI…VSARASSAEP (69 aa). 2 stretches are compositionally biased toward polar residues: residues 245-256 and 264-277; these read PGTTETSSGRNW and RNTF…SSSG. 2 positions are modified to phosphoserine: serine 412 and serine 459. SH3 domains follow at residues 444-503 and 518-579; these read KKRK…VLPA and LEYG…INRE. The interval 444-579 is binds to vinculin; the sequence is KKRKAARLKF…PASYVQINRE (136 aa). Residues 584–672 form a disordered region; the sequence is LCDDGPQLPA…INLGPSSPNT (89 aa). Phosphoserine; by MAPK1 is present on serine 594. Residues 597–613 show a composition bias toward low complexity; sequence PTTTAHLSSHSHPSSIP. A phosphoserine mark is found at serine 607, serine 610, and serine 624. Residues 638–651 show a composition bias toward polar residues; it reads EPRSQTQSLNTPGP. One can recognise an SH3 3 domain in the interval 674–733; it reads IHWTPYRAMYQYRPQNEDELELREGDRVDVMQQCDDGWFVGVSRRTQKFGTFPGNYVAPV. Residues 674 to 733 are binds to SOS; that stretch reads IHWTPYRAMYQYRPQNEDELELREGDRVDVMQQCDDGWFVGVSRRTQKFGTFPGNYVAPV.

Interacts with vinculin by the first two SH3 domains and the proline rich region of vinculin. Binds to SOS (guanine nucleotide exchange factor of RAS and RAC), through its third SH3 domain. The formation of this complex is down-regulated by phosphorylation of SOS. Interacts with SAFB2, INPPL1/SHIP2 and SRCIN1. Interacts with DLG5 through its third SH3 domain. Interacts with SOCS7 and MAPK1/ERK2. Interacts with FASLG. In terms of processing, phosphorylated at Ser-594 by MAPK1/ERK2 during cell spreading.

The protein localises to the cell junction. It localises to the focal adhesion. It is found in the cytoplasm. The protein resides in the cytoskeleton. Promotes up-regulation of actin stress fiber formation. The polypeptide is Vinexin (Sorbs3) (Mus musculus (Mouse)).